A 135-amino-acid chain; its full sequence is Small ribosomal subunit protein eS6 (135 aa).

Belongs to the eukaryotic ribosomal protein eS6 family.

The polypeptide is Small ribosomal subunit protein eS6 (Methanospirillum hungatei JF-1 (strain ATCC 27890 / DSM 864 / NBRC 100397 / JF-1)).